Consider the following 72-residue polypeptide: Cell division protein ZapB (72 aa).

The stretch at Met-1 to Asn-71 forms a coiled coil. A disordered region spans residues Leu-36–His-56. The segment covering Leu-44–His-56 has biased composition (basic and acidic residues).

Belongs to the ZapB family. As to quaternary structure, homodimer. The ends of the coiled-coil dimer bind to each other, forming polymers. Interacts with FtsZ.

It is found in the cytoplasm. In terms of biological role, non-essential, abundant cell division factor that is required for proper Z-ring formation. It is recruited early to the divisome by direct interaction with FtsZ, stimulating Z-ring assembly and thereby promoting cell division earlier in the cell cycle. Its recruitment to the Z-ring requires functional FtsA or ZipA. The chain is Cell division protein ZapB from Histophilus somni (strain 129Pt) (Haemophilus somnus).